A 396-amino-acid chain; its full sequence is Elongation factor Tu (396 aa).

Positions 10-206 (KPHVNVGTIG…ALDTYIPTPE (197 aa)) constitute a tr-type G domain. A G1 region spans residues 19–26 (GHVDHGKT). 19–26 (GHVDHGKT) provides a ligand contact to GTP. Thr-26 provides a ligand contact to Mg(2+). Positions 60-64 (GITIN) are G2. The tract at residues 81–84 (DCPG) is G3. Residues 81–85 (DCPGH) and 136–139 (NKAD) contribute to the GTP site. Residues 136-139 (NKAD) are G4. Positions 174–176 (SAK) are G5.

It belongs to the TRAFAC class translation factor GTPase superfamily. Classic translation factor GTPase family. EF-Tu/EF-1A subfamily. Monomer.

The protein resides in the cytoplasm. It catalyses the reaction GTP + H2O = GDP + phosphate + H(+). Functionally, GTP hydrolase that promotes the GTP-dependent binding of aminoacyl-tRNA to the A-site of ribosomes during protein biosynthesis. In Janthinobacterium sp. (strain Marseille) (Minibacterium massiliensis), this protein is Elongation factor Tu.